The sequence spans 474 residues: Aspartyl/glutamyl-tRNA(Asn/Gln) amidotransferase subunit B (474 aa).

Belongs to the GatB/GatE family. GatB subfamily. In terms of assembly, heterotrimer of A, B and C subunits.

It carries out the reaction L-glutamyl-tRNA(Gln) + L-glutamine + ATP + H2O = L-glutaminyl-tRNA(Gln) + L-glutamate + ADP + phosphate + H(+). It catalyses the reaction L-aspartyl-tRNA(Asn) + L-glutamine + ATP + H2O = L-asparaginyl-tRNA(Asn) + L-glutamate + ADP + phosphate + 2 H(+). In terms of biological role, allows the formation of correctly charged Asn-tRNA(Asn) or Gln-tRNA(Gln) through the transamidation of misacylated Asp-tRNA(Asn) or Glu-tRNA(Gln) in organisms which lack either or both of asparaginyl-tRNA or glutaminyl-tRNA synthetases. The reaction takes place in the presence of glutamine and ATP through an activated phospho-Asp-tRNA(Asn) or phospho-Glu-tRNA(Gln). This chain is Aspartyl/glutamyl-tRNA(Asn/Gln) amidotransferase subunit B, found in Coprothermobacter proteolyticus (strain ATCC 35245 / DSM 5265 / OCM 4 / BT).